A 227-amino-acid polypeptide reads, in one-letter code: Protein GET1 (227 aa).

The Lumenal segment spans residues 1–3 (MSL). The chain crosses the membrane as a helical span at residues 4 to 23 (LLTVFLIVFVTQLISWIGQN). Topologically, residues 24 to 107 (VLLEWAYNLY…SFSTKFNAVI (84 aa)) are cytoplasmic. Residues 72-96 (AKLRRSVDKGLAELEKLNSEIATAK) adopt a coiled-coil conformation. The helical transmembrane segment at 108–128 (WALTSGVNLVIGWWYGRKAVF) threads the bilayer. Over 129–151 (YLPEGWMGPLTWWFSFPFAPRGS) the chain is Lumenal. The chain crosses the membrane as a helical span at residues 152 to 168 (VSVGVWSFACKRVLLVL). Topologically, residues 169–227 (ERMVKELFFAETQAKEVPVGFSPSSSSSSTPNPMSKASSGSPSPRRRTTVTVESEDEKS) are cytoplasmic. The interval 184–227 (EVPVGFSPSSSSSSTPNPMSKASSGSPSPRRRTTVTVESEDEKS) is disordered. Residues 190-211 (SPSSSSSSTPNPMSKASSGSPS) are compositionally biased toward low complexity.

It belongs to the WRB/GET1 family. In terms of assembly, interacts with GET3.

The protein localises to the endoplasmic reticulum membrane. Required for the post-translational delivery of tail-anchored (TA) proteins to the endoplasmic reticulum. Acts as a membrane receptor for soluble GET3, which recognizes and selectively binds the transmembrane domain of TA proteins in the cytosol. The sequence is that of Protein GET1 from Coprinopsis cinerea (strain Okayama-7 / 130 / ATCC MYA-4618 / FGSC 9003) (Inky cap fungus).